Here is a 372-residue protein sequence, read N- to C-terminus: Cytochrome b (372 aa).

4 helical membrane-spanning segments follow: residues 25–45 (FGSM…FLAI), 69–90 (WIMQ…YTHI), 105–125 (WLSG…GYVL), and 170–190 (FFAL…IHIM). Residues His75 and His89 each coordinate heme b. Heme b is bound by residues His174 and His188. Position 193 (His193) interacts with a ubiquinone. The next 4 helical transmembrane spans lie at 218–238 (YKDM…MSFM), 280–300 (LGGT…PFTH), 312–332 (ITQV…WTAT), and 339–358 (FILI…IIHP).

Belongs to the cytochrome b family. The cytochrome bc1 complex contains 3 respiratory subunits (MT-CYB, CYC1 and UQCRFS1), 2 core proteins (UQCRC1 and UQCRC2) and probably 6 low-molecular weight proteins. Heme b serves as cofactor.

The protein localises to the mitochondrion inner membrane. Functionally, component of the ubiquinol-cytochrome c reductase complex (complex III or cytochrome b-c1 complex) that is part of the mitochondrial respiratory chain. The b-c1 complex mediates electron transfer from ubiquinol to cytochrome c. Contributes to the generation of a proton gradient across the mitochondrial membrane that is then used for ATP synthesis. The protein is Cytochrome b (MT-CYB) of Pseudechis australis (Mulga snake).